The sequence spans 962 residues: Translation initiation factor IF-2 (962 aa).

Positions 99–365 (VKAAQTQAAP…GKKGKKLKLE (267 aa)) are disordered. Residues 117-141 (DAAKARAEAAARAEARAKAEAEAAK) are compositionally biased toward basic and acidic residues. Over residues 145–155 (AKAGNKAKPAA) the composition is skewed to low complexity. Positions 173–216 (KPAEESKAEKAQADKMPSKKPAEPKEKAAKPKHERNGKGKDAKK) are enriched in basic and acidic residues. Positions 219 to 234 (KPAAPAVPQPVVSAEE) are enriched in low complexity. Over residues 235 to 269 (QAQRDEEARRAAALRAHQEALLKEKQERQARREAM) the composition is skewed to basic and acidic residues. Residues 270–283 (KQQAEQQAKAAQEA) show a composition bias toward low complexity. Over residues 338-354 (GGRDRNNARNGDDERVR) the composition is skewed to basic and acidic residues. Residues 462-631 (PRPPVVTVMG…LLEAEVLELT (170 aa)) form the tr-type G domain. Positions 471–478 (GHVDHGKT) are G1. Position 471-478 (471-478 (GHVDHGKT)) interacts with GTP. The tract at residues 496–500 (GITQH) is G2. The segment at 517–520 (DTPG) is G3. GTP-binding positions include 517-521 (DTPGH) and 571-574 (NKID). Residues 571 to 574 (NKID) are G4. A G5 region spans residues 607-609 (SAK).

This sequence belongs to the TRAFAC class translation factor GTPase superfamily. Classic translation factor GTPase family. IF-2 subfamily.

The protein localises to the cytoplasm. Its function is as follows. One of the essential components for the initiation of protein synthesis. Protects formylmethionyl-tRNA from spontaneous hydrolysis and promotes its binding to the 30S ribosomal subunits. Also involved in the hydrolysis of GTP during the formation of the 70S ribosomal complex. The sequence is that of Translation initiation factor IF-2 from Neisseria meningitidis serogroup C (strain 053442).